The sequence spans 276 residues: Large ribosomal subunit protein uL2 (276 aa).

2 disordered regions span residues 35 to 58 (RKLS…GGGH) and 218 to 276 (RPIT…KNRK). The segment covering 255 to 276 (RRPKKASNKMIVRRRPNGKNRK) has biased composition (basic residues).

The protein belongs to the universal ribosomal protein uL2 family. In terms of assembly, part of the 50S ribosomal subunit. Forms a bridge to the 30S subunit in the 70S ribosome.

In terms of biological role, one of the primary rRNA binding proteins. Required for association of the 30S and 50S subunits to form the 70S ribosome, for tRNA binding and peptide bond formation. It has been suggested to have peptidyltransferase activity; this is somewhat controversial. Makes several contacts with the 16S rRNA in the 70S ribosome. The sequence is that of Large ribosomal subunit protein uL2 from Bifidobacterium adolescentis (strain ATCC 15703 / DSM 20083 / NCTC 11814 / E194a).